We begin with the raw amino-acid sequence, 123 residues long: Defensin beta 118 (123 aa).

Residues 1-19 form the signal peptide; it reads MKLLLLALPMLVLLPQVIP. Cystine bridges form between Cys27/Cys54, Cys34/Cys48, and Cys38/Cys55. Residues 65–123 constitute a propeptide that is removed on maturation; that stretch reads VPTTSPTPLSDSTRGVIDDILTVRFTTDYFEVSSKKNMVEESEVGQGTQTSLPNVHHSS. The interval 100-123 is disordered; sequence KNMVEESEVGQGTQTSLPNVHHSS. A compositionally biased stretch (polar residues) spans 109–123; that stretch reads GQGTQTSLPNVHHSS.

The protein belongs to the beta-defensin family. In terms of processing, the three-dimensional structure formed by the three intramolecular disulfide bridges is indispensable for antimicrobial activity.

Its subcellular location is the secreted. Functionally, host defense peptide that exhibits antimicrobial activity against both Gram-negative bacteria, such as E.coli and S.typhimurium, and Gram-positive bacteria, such as S.aureus and B.subtilis. Inhibits cell adhesion of E.coli on intestinal epithelial enterocytes. Causes rapid permeabilization of both the outer and inner membrane of E.coli, leading to morphological alterations on the bacterial surface. Binds to bacterial lipopolysaccharides (LPS) with high affinity, and may thereby be involved in immunoregulation through LPS neutralization. May contribute to epididymal innate immunity and protect the sperm against attack by microorganisms. This is Defensin beta 118 (DEFB118) from Pongo pygmaeus (Bornean orangutan).